The sequence spans 188 residues: Adenylate kinase (188 aa).

10-15 (GCGKGT) provides a ligand contact to ATP. Residues 30–59 (STGDMLRHARAAGTELGRRVAAIMDGGNLV) form an NMP region. Residues threonine 31, arginine 36, 57-59 (NLV), 85-88 (GFPR), and glutamine 92 each bind AMP. Residues 126-136 (KRAEEEGRPDD) are LID. Arginine 127 is an ATP binding site. Residues arginine 133 and arginine 144 each contribute to the AMP site. Glycine 172 lines the ATP pocket.

This sequence belongs to the adenylate kinase family. Monomer.

The protein localises to the cytoplasm. The catalysed reaction is AMP + ATP = 2 ADP. It functions in the pathway purine metabolism; AMP biosynthesis via salvage pathway; AMP from ADP: step 1/1. Its function is as follows. Catalyzes the reversible transfer of the terminal phosphate group between ATP and AMP. Plays an important role in cellular energy homeostasis and in adenine nucleotide metabolism. This Maricaulis maris (strain MCS10) (Caulobacter maris) protein is Adenylate kinase.